A 348-amino-acid polypeptide reads, in one-letter code: D-erythrose-4-phosphate dehydrogenase (348 aa).

12–13 (RI) lines the NAD(+) pocket. Substrate contacts are provided by residues 154 to 156 (SCT), arginine 200, 213 to 214 (TR), and arginine 236. Residue cysteine 155 is the Nucleophile of the active site. Asparagine 318 lines the NAD(+) pocket.

The protein belongs to the glyceraldehyde-3-phosphate dehydrogenase family. Epd subfamily. In terms of assembly, homotetramer.

The protein localises to the cytoplasm. It catalyses the reaction D-erythrose 4-phosphate + NAD(+) + H2O = 4-phospho-D-erythronate + NADH + 2 H(+). Its pathway is cofactor biosynthesis; pyridoxine 5'-phosphate biosynthesis; pyridoxine 5'-phosphate from D-erythrose 4-phosphate: step 1/5. Its function is as follows. Catalyzes the NAD-dependent conversion of D-erythrose 4-phosphate to 4-phosphoerythronate. The protein is D-erythrose-4-phosphate dehydrogenase of Erwinia tasmaniensis (strain DSM 17950 / CFBP 7177 / CIP 109463 / NCPPB 4357 / Et1/99).